Reading from the N-terminus, the 78-residue chain is Acyl carrier protein (78 aa).

Residues 2-77 (STIEERVKKI…AAIDFINANQ (76 aa)) enclose the Carrier domain. An O-(pantetheine 4'-phosphoryl)serine modification is found at Ser37.

It belongs to the acyl carrier protein (ACP) family. 4'-phosphopantetheine is transferred from CoA to a specific serine of apo-ACP by AcpS. This modification is essential for activity because fatty acids are bound in thioester linkage to the sulfhydryl of the prosthetic group.

The protein resides in the cytoplasm. Its pathway is lipid metabolism; fatty acid biosynthesis. In terms of biological role, carrier of the growing fatty acid chain in fatty acid biosynthesis. This chain is Acyl carrier protein, found in Yersinia pseudotuberculosis serotype O:1b (strain IP 31758).